Consider the following 984-residue polypeptide: Translation initiation factor IF-2 (984 aa).

2 disordered regions span residues 92–267 and 280–392; these read KKRT…ERRR and MNAP…EEHV. Residues 104–123 are compositionally biased toward low complexity; it reads PATPEVQPVAEAPAAAPAAP. The span at 124–177 shows a compositional bias: basic and acidic residues; sequence RIDEAELARREEEARRQAELIRRQEEELAEKRRLREEAEAREREQAEKAERAEQ. Positions 193-235 are enriched in low complexity; sequence DAAAAAPAKEAAKPAAAPVAAAAAAAEQQAADTKLAAQTAATQ. 2 stretches are compositionally biased toward basic and acidic residues: residues 236–267 and 291–302; these read AKED…ERRR and KAPEKPQPEKAA. The segment covering 310-335 has biased composition (low complexity); that stretch reads PAAPAARPGAPAAPGAAAAPGAAGAG. Positions 351–361 are enriched in basic and acidic residues; it reads PAKKKEIKTRG. Residues 363–375 are compositionally biased toward gly residues; sequence ASGGVGRGNWRGG. Residues 381 to 392 are compositionally biased toward basic and acidic residues; the sequence is GSNDRGGHEEHV. A tr-type G domain is found at 484-653; the sequence is PRAPVVTVMG…LLQAEVLELK (170 aa). The tract at residues 493–500 is G1; it reads GHVDHGKT. GTP is bound at residue 493–500; it reads GHVDHGKT. The interval 518–522 is G2; it reads GITQH. Residues 539 to 542 are G3; that stretch reads DTPG. GTP contacts are provided by residues 539–543 and 593–596; these read DTPGH and NKID. The tract at residues 593 to 596 is G4; the sequence is NKID. The interval 629–631 is G5; that stretch reads SAK.

It belongs to the TRAFAC class translation factor GTPase superfamily. Classic translation factor GTPase family. IF-2 subfamily.

Its subcellular location is the cytoplasm. Functionally, one of the essential components for the initiation of protein synthesis. Protects formylmethionyl-tRNA from spontaneous hydrolysis and promotes its binding to the 30S ribosomal subunits. Also involved in the hydrolysis of GTP during the formation of the 70S ribosomal complex. The protein is Translation initiation factor IF-2 of Variovorax paradoxus (strain S110).